Consider the following 226-residue polypeptide: MHFLIPAAGSGSRMKAGKNKLLIDLEGESLIYWTLKSVFSASSTNWVGIIGQPKDKELLLNSAKNFAHKVHWINGGDTRQESVFNGLKALPKDAEKVLIHDGARCLINPELIDQCANQLDQNEAVILATKVTDTIKIVDNEGFIKETPDRNYLWAAQTPQGFLVDRLKKAHTMAIDKNWKVTDDASLFEMLNWKVKIIEGTYSNIKITSPIDLKIAKLFVKNSTPS.

This sequence belongs to the IspD/TarI cytidylyltransferase family. IspD subfamily.

The catalysed reaction is 2-C-methyl-D-erythritol 4-phosphate + CTP + H(+) = 4-CDP-2-C-methyl-D-erythritol + diphosphate. The protein operates within isoprenoid biosynthesis; isopentenyl diphosphate biosynthesis via DXP pathway; isopentenyl diphosphate from 1-deoxy-D-xylulose 5-phosphate: step 2/6. Its function is as follows. Catalyzes the formation of 4-diphosphocytidyl-2-C-methyl-D-erythritol from CTP and 2-C-methyl-D-erythritol 4-phosphate (MEP). This Prochlorococcus marinus (strain MIT 9312) protein is 2-C-methyl-D-erythritol 4-phosphate cytidylyltransferase.